Reading from the N-terminus, the 637-residue chain is Biosynthetic arginine decarboxylase (637 aa).

N6-(pyridoxal phosphate)lysine is present on K110. I290 to Y300 is a substrate binding site.

The protein belongs to the Orn/Lys/Arg decarboxylase class-II family. SpeA subfamily. Mg(2+) is required as a cofactor. Pyridoxal 5'-phosphate serves as cofactor.

The enzyme catalyses L-arginine + H(+) = agmatine + CO2. Catalyzes the biosynthesis of agmatine from arginine. The polypeptide is Biosynthetic arginine decarboxylase (Pseudomonas putida (strain ATCC 47054 / DSM 6125 / CFBP 8728 / NCIMB 11950 / KT2440)).